The sequence spans 267 residues: Interleukin-2 receptor subunit alpha (267 aa).

A signal peptide spans 1–21 (MEPHLLMLGFLSFTIVPGCWA). Positions 22-79 (ELCLYDPPEVPNATFKALSYKNGTILNCECKRGFRRLNELVYMACLGNSWSNNCQCTS) constitute a Sushi 1 domain. Residues 22–235 (ELCLYDPPEV…ETFVFTKEYQ (214 aa)) are Extracellular-facing. 3 disulfide bridges follow: Cys24–Cys66, Cys49–Cys75, and Cys51–Cys77. Residues Asn33 and Asn43 are each glycosylated (N-linked (GlcNAc...) asparagine). The segment covering 82–93 (HDNSREQVTPQP) has biased composition (polar residues). The interval 82–108 (HDNSREQVTPQPEGQKEQQTTDTQKST) is disordered. A compositionally biased stretch (low complexity) spans 98–108 (EQQTTDTQKST). The 64-residue stretch at 118–181 (GHCREPPPWR…WTHPQLTCVD (64 aa)) folds into the Sushi 2 domain. 2 disulfide bridges follow: Cys120-Cys163 and Cys147-Cys179. The interval 191 to 215 (SEESQGSRNSFPESEASCPTPNTDF) is disordered. A compositionally biased stretch (polar residues) spans 192–215 (EESQGSRNSFPESEASCPTPNTDF). A helical membrane pass occupies residues 236–256 (VAVASCIFLLLSILLLSGFTW). At 257–267 (QHRWRKSRRTI) the chain is on the cytoplasmic side.

As to quaternary structure, non-covalent dimer of an alpha and a beta subunit. IL2R exists in 3 different forms: a high affinity dimer, an intermediate affinity monomer (beta subunit), and a low affinity monomer (alpha subunit). The high and intermediate affinity forms also associate with a gamma subunit.

The protein localises to the membrane. Receptor for interleukin-2. The receptor is involved in the regulation of immune tolerance by controlling regulatory T cells (TREGs) activity. TREGs suppress the activation and expansion of autoreactive T-cells. This chain is Interleukin-2 receptor subunit alpha (Il2ra), found in Rattus norvegicus (Rat).